We begin with the raw amino-acid sequence, 131 residues long: DNA-directed RNA polymerase subunit omega (131 aa).

Residues 78 to 131 (DEPEAEAVPALSSAPDAAQSDAMGDVQFDRMTEEDLLRGLEGLVPPAATDDDGE) form a disordered region. Residues 104-115 (QFDRMTEEDLLR) show a composition bias toward basic and acidic residues.

It belongs to the RNA polymerase subunit omega family. The RNAP catalytic core consists of 2 alpha, 1 beta, 1 beta' and 1 omega subunit. When a sigma factor is associated with the core the holoenzyme is formed, which can initiate transcription.

It catalyses the reaction RNA(n) + a ribonucleoside 5'-triphosphate = RNA(n+1) + diphosphate. Promotes RNA polymerase assembly. Latches the N- and C-terminal regions of the beta' subunit thereby facilitating its interaction with the beta and alpha subunits. The chain is DNA-directed RNA polymerase subunit omega from Beijerinckia indica subsp. indica (strain ATCC 9039 / DSM 1715 / NCIMB 8712).